We begin with the raw amino-acid sequence, 879 residues long: Beta-mannosidase (879 aa).

A signal peptide spans 1–17; it reads MLLRLLLLLAPCGAGFA. Asn-35 and Asn-77 each carry an N-linked (GlcNAc...) asparagine glycan. A disulfide bridge links Cys-167 with Cys-176. 190–192 provides a ligand contact to substrate; that stretch reads WDW. Residues Asn-297 and Asn-302 are each glycosylated (N-linked (GlcNAc...) asparagine). Asn-456 provides a ligand contact to substrate. Catalysis depends on Glu-457, which acts as the Proton donor. Intrachain disulfides connect Cys-540/Cys-629, Cys-732/Cys-761, and Cys-764/Cys-769. The active-site Nucleophile is Glu-554. Asn-607 carries an N-linked (GlcNAc...) asparagine glycan. N-linked (GlcNAc...) asparagine glycosylation is present at Asn-803.

It belongs to the glycosyl hydrolase 2 family. In terms of assembly, monomer. In terms of processing, the N-terminus is blocked. Post-translationally, N-glycosylated. In terms of tissue distribution, detected in kidney (at protein level). Highest expression is found in thyroid tissue. The amount of transcript is significantly higher in normal tissues than in tissues affected by the disease.

It is found in the lysosome. It carries out the reaction Hydrolysis of terminal, non-reducing beta-D-mannose residues in beta-D-mannosides.. It functions in the pathway glycan metabolism; N-glycan degradation. Functionally, exoglycosidase that cleaves the single beta-linked mannose residue from the non-reducing end of all N-linked glycoprotein oligosaccharides. This chain is Beta-mannosidase (MANBA), found in Bos taurus (Bovine).